Here is a 241-residue protein sequence, read N- to C-terminus: 2,3-bisphosphoglycerate-dependent phosphoglycerate mutase (241 aa).

Histidine 12 functions as the Tele-phosphohistidine intermediate in the catalytic mechanism. Residues 24 to 25 (SG), arginine 61, 117 to 120 (ERYY), and lysine 128 contribute to the substrate site. Glutamate 117 (proton donor/acceptor) is an active-site residue.

Belongs to the phosphoglycerate mutase family. BPG-dependent PGAM subfamily.

The catalysed reaction is (2R)-2-phosphoglycerate = (2R)-3-phosphoglycerate. The protein operates within carbohydrate degradation; glycolysis; pyruvate from D-glyceraldehyde 3-phosphate: step 3/5. Its function is as follows. Catalyzes the interconversion of 2-phosphoglycerate and 3-phosphoglycerate. This chain is 2,3-bisphosphoglycerate-dependent phosphoglycerate mutase, found in Methanosarcina mazei (strain ATCC BAA-159 / DSM 3647 / Goe1 / Go1 / JCM 11833 / OCM 88) (Methanosarcina frisia).